Consider the following 368-residue polypeptide: Phospho-N-acetylmuramoyl-pentapeptide-transferase (368 aa).

10 consecutive transmembrane segments (helical) span residues Gly-34–Leu-54, Thr-79–Ala-99, Leu-102–Tyr-122, Ala-140–Gly-160, Leu-176–Gly-196, Gly-207–Ala-227, Leu-247–Pro-267, Ile-271–Ala-291, Ile-296–Val-316, and Gln-345–Leu-365.

This sequence belongs to the glycosyltransferase 4 family. MraY subfamily. Requires Mg(2+) as cofactor.

The protein resides in the cell inner membrane. The enzyme catalyses UDP-N-acetyl-alpha-D-muramoyl-L-alanyl-gamma-D-glutamyl-meso-2,6-diaminopimeloyl-D-alanyl-D-alanine + di-trans,octa-cis-undecaprenyl phosphate = di-trans,octa-cis-undecaprenyl diphospho-N-acetyl-alpha-D-muramoyl-L-alanyl-D-glutamyl-meso-2,6-diaminopimeloyl-D-alanyl-D-alanine + UMP. The protein operates within cell wall biogenesis; peptidoglycan biosynthesis. Its function is as follows. Catalyzes the initial step of the lipid cycle reactions in the biosynthesis of the cell wall peptidoglycan: transfers peptidoglycan precursor phospho-MurNAc-pentapeptide from UDP-MurNAc-pentapeptide onto the lipid carrier undecaprenyl phosphate, yielding undecaprenyl-pyrophosphoryl-MurNAc-pentapeptide, known as lipid I. In Bradyrhizobium sp. (strain ORS 278), this protein is Phospho-N-acetylmuramoyl-pentapeptide-transferase.